A 156-amino-acid polypeptide reads, in one-letter code: UPF0262 protein Jann_2882 (156 aa).

This sequence belongs to the UPF0262 family.

The chain is UPF0262 protein Jann_2882 from Jannaschia sp. (strain CCS1).